A 426-amino-acid chain; its full sequence is MRILIEDVNILIDDKIVENKNILIENDIIKQISDSKSFERIDYIIDGKNKIALPGLVNTHTHLAMTLFRGFADDLPLEEWLEEKIWPQEAKLTADDVYWGSLLGICEMIRGGTIAFSDMYFFMDEMAKAVAESGIKASLSVGMIGIAGDENETLNRGVSFAKNWHNAEDGRIRVMLGPHAPYTCPPSFLEKVIDKAIEMSLGIHTHLSETYLEVENIKNMYGLTPIRLMDRVGLFNVPVLAAHCVFVDDEEIEILSEKGVGVAHNPQSNLKLASGVAPVKKMLEKGVKVGLGTDGPASNNNLDMWEEIRLVATLHKGVERDPICVPARDALIMATKNGMEILGFENSGIIKEGYKADLILVDVNKPHFYPRHNLVSHLVYSASSSDVDTVIVDGRILMEKRELKTLDEEKIMYEAEKRAFELIKKS.

Zn(2+)-binding residues include His60 and His62. Glu89 and His179 together coordinate substrate. Position 206 (His206) interacts with Zn(2+). Substrate contacts are provided by Glu209 and Asp294. Asp294 contacts Zn(2+).

This sequence belongs to the metallo-dependent hydrolases superfamily. MTA/SAH deaminase family. The cofactor is Zn(2+).

The catalysed reaction is S-adenosyl-L-homocysteine + H2O + H(+) = S-inosyl-L-homocysteine + NH4(+). It catalyses the reaction S-methyl-5'-thioadenosine + H2O + H(+) = S-methyl-5'-thioinosine + NH4(+). In terms of biological role, catalyzes the deamination of 5-methylthioadenosine and S-adenosyl-L-homocysteine into 5-methylthioinosine and S-inosyl-L-homocysteine, respectively. Is also able to deaminate adenosine. The protein is 5-methylthioadenosine/S-adenosylhomocysteine deaminase of Dictyoglomus thermophilum (strain ATCC 35947 / DSM 3960 / H-6-12).